The sequence spans 143 residues: Endoribonuclease YbeY (143 aa).

Residues His109, His113, and His119 each coordinate Zn(2+).

The protein belongs to the endoribonuclease YbeY family. Zn(2+) serves as cofactor.

It localises to the cytoplasm. Functionally, single strand-specific metallo-endoribonuclease involved in late-stage 70S ribosome quality control and in maturation of the 3' terminus of the 16S rRNA. The polypeptide is Endoribonuclease YbeY (Neorickettsia sennetsu (strain ATCC VR-367 / Miyayama) (Ehrlichia sennetsu)).